Consider the following 181-residue polypeptide: Peptidyl-tRNA hydrolase (181 aa).

Tyrosine 14 contacts tRNA. The active-site Proton acceptor is the histidine 19. Tyrosine 62, asparagine 64, and asparagine 108 together coordinate tRNA.

It belongs to the PTH family. In terms of assembly, monomer.

It is found in the cytoplasm. It carries out the reaction an N-acyl-L-alpha-aminoacyl-tRNA + H2O = an N-acyl-L-amino acid + a tRNA + H(+). Its function is as follows. Hydrolyzes ribosome-free peptidyl-tRNAs (with 1 or more amino acids incorporated), which drop off the ribosome during protein synthesis, or as a result of ribosome stalling. Catalyzes the release of premature peptidyl moieties from peptidyl-tRNA molecules trapped in stalled 50S ribosomal subunits, and thus maintains levels of free tRNAs and 50S ribosomes. This is Peptidyl-tRNA hydrolase from Campylobacter jejuni subsp. jejuni serotype O:23/36 (strain 81-176).